A 1072-amino-acid polypeptide reads, in one-letter code: Guanylyl cyclase C (1072 aa).

The N-terminal stretch at 1–22 is a signal peptide; sequence MTSLLGLAVRLLLFQPTLMFWA. The Extracellular portion of the chain corresponds to 23–429; the sequence is SQVRQKCHNG…PNDVPGLGPQ (407 aa). N-linked (GlcNAc...) asparagine glycans are attached at residues N31, N74, N78, N187, N194, N306, and N401. Residues 430–453 form a helical membrane-spanning segment; the sequence is ILMIAVFTLTGIVVVLLLIALLVL. Topologically, residues 454-1072 are cytoplasmic; it reads RKYRRDHELR…NNSDHDSTYF (619 aa). Residues 488 to 748 enclose the Protein kinase domain; that stretch reads LKIDDDRRRD…KIESTLAKIF (261 aa). A Guanylate cyclase domain is found at 823–953; that stretch reads TIYFSDIVGF…DTVNTASRME (131 aa).

This sequence belongs to the adenylyl cyclase class-4/guanylyl cyclase family. Homotrimer. Interacts via its C-terminal region with PDZK2. Interacts with the lectin chaperone VIP36. Post-translationally, glycosylation at Asn-74 and/or Asn-78 is required for interaction with VIP36 while glycosylation at Asn-401 modulates ligand-mediated GC-C activation.

The protein resides in the cell membrane. Its subcellular location is the endoplasmic reticulum membrane. The catalysed reaction is GTP = 3',5'-cyclic GMP + diphosphate. Functionally, guanylyl cyclase that catalyzes synthesis of cyclic GMP (cGMP) from GTP. Receptor for the E.coli heat-stable enterotoxin; E.coli enterotoxin markedly stimulates the accumulation of cGMP in mammalian cells expressing GUCY2C. The protein is Guanylyl cyclase C (Gucy2c) of Rattus norvegicus (Rat).